Consider the following 80-residue polypeptide: Nuclear protein 1 (80 aa).

The disordered stretch occupies residues 40–80 (GGRKGRTKREAAANTNRPSPGGHERKLLTKFQNSERKKAWR). Over residues 61–80 (GHERKLLTKFQNSERKKAWR) the composition is skewed to basic and acidic residues. The Nuclear localization signal motif lies at 64 to 80 (RKLLTKFQNSERKKAWR).

The protein belongs to the NUPR family. Monomer. Directly interacts with MSL1 and binds MORF4L1, two components of histone acetyltransferase complex; the interaction with MORF4L1 may be mediated by MSL1. Interacts with EP300; this interaction enhances the effect of EP300 on PAX2 transcription factor activity. Interacts with PAXIP1; this interaction prevents PAXIP1 inhibition of PAX2 transcription factor activity. Interacts with COPS5; this interaction allows COPS5-dependent CDKN1B nuclear to cytoplasm translocation. Interacts with RNF2. Interacts with FOXO3; this interaction represses FOXO3 transactivation. Interacts with PTMA; regulates apoptotic process. Interacts with MYOD1, EP300 and DDX5; this interaction coordinates the association of anti-proliferative and pro-myogenic proteins at the myogenin promoter. Interacts with TP53; interaction is stress-dependent. Forms a complex with EP300 and TP53; this complex binds CDKN1A promoter leading to transcriptional induction of CDKN1A. Post-translationally, phosphorylated. Phosphorylation promotes DNA-binding activity. Acetylated. As to expression, strongly activated in pancreatic acinar cells during the acute phase of pancreatitis, in developing pancreas and during pancreatic regeneration.

It is found in the nucleus. Its subcellular location is the cytoplasm. The protein localises to the perinuclear region. Its function is as follows. Transcription regulator that converts stress signals into a program of gene expression that empowers cells with resistance to the stress induced by a change in their microenvironment. Thereby participates in the regulation of many processes namely cell-cycle, apoptosis, autophagy and DNA repair responses. Controls cell cycle progression and protects cells from genotoxic stress induced by doxorubicin through the complex formation with TP53 and EP300 that binds CDKN1A promoter leading to transcriptional induction of CDKN1A. Protects pancreatic cancer cells from stress-induced cell death by binding the RELB promoter and activating its transcription, leading to IER3 transactivation. Negatively regulates apoptosis through interaction with PTMA. Inhibits autophagy-induced apoptosis in cardiac cells through FOXO3 interaction, inducing cytoplasmic translocation of FOXO3 thereby preventing the FOXO3 association with the pro-autophagic BNIP3 promoter. Inhibits cell growth and facilitates programmed cell death by apoptosis after adriamycin-induced DNA damage through transactivation of TP53. Regulates methamphetamine-induced apoptosis and autophagy through DDIT3-mediated endoplasmic reticulum stress pathway. Participates in DNA repair following gamma-irradiation by facilitating DNA access of the transcription machinery through interaction with MSL1 leading to inhibition of histone H4' Lys-16' acetylation (H4K16ac). Coactivator of PAX2 transcription factor activity, both by recruiting the EP300 cofactor to increase PAX2 transcription factor activity and by binding PAXIP1 to suppress PAXIP1-induced inhibition on PAX2. Positively regulates cell cycle progression through interaction with COPS5 inducing cytoplasmic translocation of CDKN1B leading to the CDKN1B degradation. Coordinates, through its interaction with EP300, the assiociation of MYOD1, EP300 and DDX5 to the MYOG promoter, leading to inhibition of cell-cycle progression and myogenic differentiation promotion. Negatively regulates beta cell proliferation via inhibition of cell-cycle regulatory genes expression through the suppression of their promoter activities. Also required for LHB expression and ovarian maturation. Exacerbates CNS inflammation and demyelination upon cuprizone treatment. The sequence is that of Nuclear protein 1 from Rattus norvegicus (Rat).